Here is a 352-residue protein sequence, read N- to C-terminus: Large ribosomal subunit protein uL10 (352 aa).

A compositionally biased stretch (acidic residues) spans 286-297 (DDEDALPEELQD). The interval 286–352 (DDEDALPEEL…GAEGLGEMFG (67 aa)) is disordered. Residues 299–310 (DAPAAPAGGEAD) show a composition bias toward low complexity. Residues 324–340 (EADDADDSDDDDDDDDG) show a composition bias toward acidic residues. Gly residues predominate over residues 343-352 (GAEGLGEMFG).

This sequence belongs to the universal ribosomal protein uL10 family. As to quaternary structure, part of the 50S ribosomal subunit. Forms part of the ribosomal stalk which helps the ribosome interact with GTP-bound translation factors. Forms a heptameric L10(L12)2(L12)2(L12)2 complex, where L10 forms an elongated spine to which the L12 dimers bind in a sequential fashion.

Functionally, forms part of the ribosomal stalk, playing a central role in the interaction of the ribosome with GTP-bound translation factors. The protein is Large ribosomal subunit protein uL10 of Halobacterium salinarum (strain ATCC 700922 / JCM 11081 / NRC-1) (Halobacterium halobium).